A 3147-amino-acid chain; its full sequence is MNKNSKIQSPNSSDVAVIGVGFRFPGNSNDPESLWNNLLDGFDAITQVPKERWATSFREMGLIKNKFGGFLKDSEWKNFDPLFFGIGPKEAPFIDPQQRLLLSIVWESLEDAYIRPDELRGSNTGVFIGVSNNDYTKLGFQDNYSISPYTMTGSNSSLNSNRISYCFDFRGPSITVDTACSSSLVSVNLGVQSIQMGECKIAICGGVNALFDPSTSVAFSKLGVLSENGRCNSFSDQASGYVRSEGAGVVVLKSLEQAKLDGDRIYGVIKGVSSNEDGASNGDKNSLTTPSCEAQSINISKAMEKASLSPSDIYYIEAHGTGTPVGDPIEVKALSKIFSNSNNNQLNNFSTDGNDNDDDDDDNTSPEPLLIGSFKSNIGHLESAAGIASLIKCCLMLKNRMLVPSINCSNLNPSIPFDQYNISVIREIRQFPTDKLVNIGINSFGFGGSNCHLIIQEYNNNFKNNSTICNNNNNNNNNIDYLIPISSKTKKSLDKYLILIKTNSNYHKDISFDDFVKFQIKSKQYNLSNRMTTIANDWNSFIKGSNEFHNLIESKDGEGGSSSSNRGIDSANQINTTTTSTINDIEPLLVFVFCGQGPQWNGMIKTLYNSENVFKNTVDHVDSILYKYFGYSILNVLSKIDDNDDSINHPIVAQPSLFLLQIGLVELFKYWGIYPSISVGHSFGEVSSYYLSGIISLETACKIVYVRSSNQNKTMGSGKMLVVSMGFKQWNDQFSAEWSDIEIACYNAPDSIVVTGNEERLKELSIKLSDESNQIFNTFLRSPCSFHSSHQEVIKGSMFEELSNLQSTGETEIPLFSTVTGRQVLSGHVTAQHIYDNVREPVLFQKTIESITSYIKSHYPSNQKVIYVEIAPHPTLFSLIKKSIPSSNKNSSSVLCPLNRKENSNNSYKKFVSQLYFNGVNVDFNFQLNSICDNVNNDHHLNNVKQNSFKETTNSLPRYQWEQDEYWSEPLISRKNRLEGPTTSLLGHRIIYSFPVFQSVLDLQSDNYKYLLDHLVNGKPVFPGAGYLDIIIEFFDYQKQQLNSSDSSNSYIINVDKIQFLNPIHLTENKLQTLQSSFEPIVTKKSAFSVNFFIKDTVEDQSKVKSMSDETWTNTCKATISLEQQQPSPSSTLTLSKKQDLQILRNRCDISKLDKFELYDKISKNLGLQYNSLFQVVDTIETGKDCSFATLSLPEDTLFTTILNPCLLDNCFHGLLTLINEKGSFVVESISSVSIYLENIGSFNQTSVGNVQFYLYTTISKATSFSSEGTCKLFTKDGSLILSIGKFIIKSTNPKSTKTNETIESPLDETFSIEWQSKDSPIPTPQQIQQQSPLNSNPSFIRSTILKDIQFEQYCSSIIHKELINHEKYKNQQSFDINSLENHLNDDQLMESLSISKEYLRFFTRIISIIKQYPKILNEKELKELKEIIELKYPSEVQLLEFEVIEKVSMIIPKLLFENDKQSSMTLFQDNLLTRFYSNSNSTRFYLERVSEMVLESIRPIVREKRVFRILEIGAGTGSLSNVVLTKLNTYLSTLNSNGGSGYNIIIEYTFTDISANFIIGEIQETMCNLYPNVTFKFSVLDLEKEIINSSDFLMGDYDIVLMAYVIHAVSNIKFSIEQLYKLLSPRGWLLCIEPKSNVVFSDLVFGCFNQWWNYYDDIRTTHCSLSESQWNQLLLNQSLNNESSSSSNCYGGFSNVSFIGGEKDVDSHSFILHCQKESISQMKLATTINNGLSSGSIVIVLNSQQLTNMKSYPKVIEYIQEATSLCKTIEIIDSKDVLNSTNSVLEKIQKSLLVFCLLGYDLLENNYQEQSFEYVKLLNLISTTASSSNDKKPPKVLLITKQSERISRSFYSRSLIGISRTSMNEYPNLSITSIDLDTNDYSLQSLLKPIFSNSKFSDNEFIFKKGLMFVSRIFKNKQLLESSNAFETDSSNLYCKASSDLSYKYAIKQSMLTENQIEIKVECVGINFKDNLFYKGLLPQEIFRMGDIYNPPYGLECSGVITRIGSNVTEYSVGQNVFGFARHSLGSHVVTNKDLVILKPDTISFSEAASIPVVYCTAWYSLFNIGQLSNEESILIHSATGGVGLASLNLLKMKNQQQQPLTNVYATVGSNEKKKFLIDNFNNLFKEDGENIFSTRDKEYSNQLESKIDVILNTLSGEFVESNFKSLRSFGRLIDLSATHVYANQQIGLGNFKFDHLYSAVDLERLIDEKPKLLQSILQRITNSIVNGSLEKIPITIFPSTETKDAIELLSKRSHIGKVVVDCTDISKCNPVGDVITNFSMRLPKPNYQLNLNSTLLITGQSGLSIPLLNWLLSKSGGNVKNVVIISKSTMKWKLQTMISHFVSGFGIHFNYVQVDISNYDALSEAIKQLPSDLPPITSVFHLAAIYNDVPMDQVTMSTVESVHNPKVLGAVNLHRISVSFGWKLNHFVLFSSITAITGYPDQSIYNSANSILDALSNFRRFMGLPSFSINLGPMKDEGKVSTNKSIKKLFKSRGLPSLSLNKLFGLLEVVINNPSNHVIPSQLICSPIDFKTYIESFSTMRPKLLHLQPTISKQQSSIINDSTKASSNISLQDKITSKVSDLLSIPISKINFDHPLKHYGLDSLLTVQFKSWIDKEFEKNLFTHIQLATISINSFLEKVNGLSTNNNNNNNSNVKSSPSIVKEEIVTLDKDQQPLLLKEHQHIIISPDIRINKPKRESLIRTPILNKFNQITESIITPSTPSLSQSDVLKTPPIKSLNNTKNSSLINTPPIQSVQQHQKQQQKVQVIQQQQQPLSRLSYKSNNNSFVLGIGISVPGEPISQQSLKDSISNDFSDKAETNEKVKRIFEQSQIKTRHLVRDYTKPENSIKFRHLETITDVNNQFKKVVPDLAQQACLRALKDWGGDKGDITHIVSVTSTGIIIPDVNFKLIDLLGLNKDVERVSLNLMGCLAGLSSLRTAASLAKASPRNRILVVCTEVCSLHFSNTDGGDQMVASSIFADGSAAYIIGCNPRIEETPLYEVMCSINRSFPNTENAMVWDLEKEGWNLGLDASIPIVIGSGIEAFVDTLLDKAKLQTSTAISAKDCEFLIHTGGKSILMNIENSLGIDPKQTKNTWDVYHAYGNMSSASVIFVMDHARKSKSLPTYSISLAFGPGLAFEGCFLKNVV.

Positions 12-457 constitute a Ketosynthase family 3 (KS3) domain; the sequence is SSDVAVIGVG…GSNCHLIIQE (446 aa). Residues C180 and H319 each act as for beta-ketoacyl synthase activity in the active site. The tract at residues 345–369 is disordered; sequence QLNNFSTDGNDNDDDDDDNTSPEPL. Residues 354-364 are compositionally biased toward acidic residues; that stretch reads NDNDDDDDDNT. The For beta-ketoacyl synthase activity role is filled by H380. The tract at residues 672–705 is acyl/malonyl transferase; that stretch reads GIYPSISVGHSFGEVSSYYLSGIISLETACKIVY. Catalysis depends on S682, which acts as the For acyl/malonyl transferase activity. The N-terminal hotdog fold stretch occupies residues 976 to 1127; it reads NRLEGPTTSL…ATISLEQQQP (152 aa). Positions 976 to 1298 constitute a PKS/mFAS DH domain; it reads NRLEGPTTSL…IKSTNPKSTK (323 aa). H1014 functions as the Proton acceptor; for dehydratase activity in the catalytic mechanism. The tract at residues 1149–1298 is C-terminal hotdog fold; the sequence is DISKLDKFEL…IKSTNPKSTK (150 aa). D1209 serves as the catalytic Proton donor; for dehydratase activity. Residues 2568-2645 enclose the Carrier domain; the sequence is SSNISLQDKI…SFLEKVNGLS (78 aa). S2605 carries the post-translational modification O-(pantetheine 4'-phosphoryl)serine. A disordered region spans residues 2723–2747; the sequence is PSLSQSDVLKTPPIKSLNNTKNSSL. Residues 2738–2747 are compositionally biased toward polar residues; sequence SLNNTKNSSL. Positions 2789–3147 are chalcone synthase; it reads VLGIGISVPG…FEGCFLKNVV (359 aa). The active site involves C2930.

The protein in the C-terminal section; belongs to the thiolase-like superfamily. Chalcone/stilbene synthases family. In terms of assembly, homodimer. Requires pantetheine 4'-phosphate as cofactor.

It carries out the reaction (E)-4-coumaroyl-CoA + 3 malonyl-CoA + 3 H(+) = 2',4,4',6'-tetrahydroxychalcone + 3 CO2 + 4 CoA. The protein operates within secondary metabolite biosynthesis; flavonoid biosynthesis. Functionally, probable polyketide synthase. Produces only acylpyrones; in vitro. The polypeptide is Probable polyketide synthase 1 (stlA) (Dictyostelium discoideum (Social amoeba)).